Reading from the N-terminus, the 201-residue chain is Holliday junction branch migration complex subunit RuvA (201 aa).

Residues 1-64 (MYEYIRGQFQ…EDFIGLYGFT (64 aa)) form a domain I region. The segment at 65–143 (TKEELEMFKL…PDELTSEEEQ (79 aa)) is domain II. The segment at 144–152 (LIEGINDNS) is flexible linker. Positions 153-201 (DYSFNINETLSALMALGYTEKEAQKALEKVDKTLSIENMIKESLKLLMR) are domain III.

This sequence belongs to the RuvA family. In terms of assembly, homotetramer. Forms an RuvA(8)-RuvB(12)-Holliday junction (HJ) complex. HJ DNA is sandwiched between 2 RuvA tetramers; dsDNA enters through RuvA and exits via RuvB. An RuvB hexamer assembles on each DNA strand where it exits the tetramer. Each RuvB hexamer is contacted by two RuvA subunits (via domain III) on 2 adjacent RuvB subunits; this complex drives branch migration. In the full resolvosome a probable DNA-RuvA(4)-RuvB(12)-RuvC(2) complex forms which resolves the HJ.

It is found in the cytoplasm. Functionally, the RuvA-RuvB-RuvC complex processes Holliday junction (HJ) DNA during genetic recombination and DNA repair, while the RuvA-RuvB complex plays an important role in the rescue of blocked DNA replication forks via replication fork reversal (RFR). RuvA specifically binds to HJ cruciform DNA, conferring on it an open structure. The RuvB hexamer acts as an ATP-dependent pump, pulling dsDNA into and through the RuvAB complex. HJ branch migration allows RuvC to scan DNA until it finds its consensus sequence, where it cleaves and resolves the cruciform DNA. The polypeptide is Holliday junction branch migration complex subunit RuvA (Clostridium perfringens (strain SM101 / Type A)).